The primary structure comprises 166 residues: Ribosome maturation factor RimP (166 aa).

It belongs to the RimP family.

The protein localises to the cytoplasm. In terms of biological role, required for maturation of 30S ribosomal subunits. The polypeptide is Ribosome maturation factor RimP (Psychrobacter arcticus (strain DSM 17307 / VKM B-2377 / 273-4)).